The sequence spans 337 residues: Glyceraldehyde-3-phosphate dehydrogenase 2 (337 aa).

Residues 11 to 12, Asp-35, Arg-80, and Thr-122 each bind NADP(+); that span reads RI. Residues 153-155, Thr-184, Arg-199, 212-213, and Arg-235 contribute to the D-glyceraldehyde 3-phosphate site; these read SCT and TG. Catalysis depends on Cys-154, which acts as the Nucleophile. Asn-317 contacts NADP(+).

In terms of assembly, homotetramer.

Its subcellular location is the cytoplasm. The catalysed reaction is D-glyceraldehyde 3-phosphate + phosphate + NADP(+) = (2R)-3-phospho-glyceroyl phosphate + NADPH + H(+). It catalyses the reaction D-glyceraldehyde 3-phosphate + phosphate + NAD(+) = (2R)-3-phospho-glyceroyl phosphate + NADH + H(+). It functions in the pathway carbohydrate biosynthesis; Calvin cycle. In terms of biological role, gap2 has a major role in carbon fixation as a component of the Calvin cycle. Catalyzes the oxidative phosphorylation of glyceraldehyde 3-phosphate (G3P) to 1,3-bisphosphoglycerate (BPG) using the cofactor NADP. The first reaction step involves the formation of a hemiacetal intermediate between G3P and a cysteine residue, and this hemiacetal intermediate is then oxidized to a thioester, with concomitant reduction of NADP to NADPH. The reduced NADPH is then exchanged with the second NAD, and the thioester is attacked by a nucleophilic inorganic phosphate to produce BPG. This is Glyceraldehyde-3-phosphate dehydrogenase 2 (gap2) from Nostoc sp. (strain PCC 7120 / SAG 25.82 / UTEX 2576).